Reading from the N-terminus, the 858-residue chain is Heat shock protein 105 kDa (858 aa).

Position 2 is an N-acetylserine (Ser2). Lys471 is modified (N6-acetyllysine). 2 disordered regions span residues 500–585 (KVPT…PPEA) and 801–858 (VNQP…MDLD). Over residues 504-515 (EEDDGSSVEADM) the composition is skewed to acidic residues. 2 positions are modified to phosphoserine: Ser509 and Ser510. Positions 533–549 (QQDNSEAGTQPQVQTDG) are enriched in polar residues. Residue Ser558 is modified to Phosphoserine. 2 stretches are compositionally biased toward basic and acidic residues: residues 564 to 585 (EENK…PPEA) and 806 to 815 (PKIESPKLER). Residue Ser810 is modified to Phosphoserine. At Thr816 the chain carries Phosphothreonine. Positions 822–834 (LDKKEDLEGKDNF) are enriched in basic and acidic residues.

Belongs to the heat shock protein 70 family. As to quaternary structure, interacts with HSPA8/HSC70. Interacts with HSPA1A (via NBD) and HSPA1B (via NBD). Post-translationally, phosphorylation on Ser-509 may be important for regulation of the HSPA8/HSC70 chaperone activity. As to expression, predominantly expressed in the brain and also found in the liver.

The protein localises to the cytoplasm. Acts as a nucleotide-exchange factor (NEF) for chaperone proteins HSPA1A and HSPA1B, promoting the release of ADP from HSPA1A/B thereby triggering substrate release. Prevents the aggregation of denatured proteins in cells under severe stress, on which the ATP levels decrease markedly. Inhibits HSPA8/HSC70 ATPase and chaperone activities. This chain is Heat shock protein 105 kDa (HSPH1), found in Cricetulus griseus (Chinese hamster).